A 367-amino-acid chain; its full sequence is UDP-N-acetylglucosamine--N-acetylmuramyl-(pentapeptide) pyrophosphoryl-undecaprenol N-acetylglucosamine transferase (367 aa).

Residues 13–15, asparagine 125, arginine 165, serine 192, and glutamine 293 each bind UDP-N-acetyl-alpha-D-glucosamine; that span reads TGG.

Belongs to the glycosyltransferase 28 family. MurG subfamily.

Its subcellular location is the cell inner membrane. The enzyme catalyses di-trans,octa-cis-undecaprenyl diphospho-N-acetyl-alpha-D-muramoyl-L-alanyl-D-glutamyl-meso-2,6-diaminopimeloyl-D-alanyl-D-alanine + UDP-N-acetyl-alpha-D-glucosamine = di-trans,octa-cis-undecaprenyl diphospho-[N-acetyl-alpha-D-glucosaminyl-(1-&gt;4)]-N-acetyl-alpha-D-muramoyl-L-alanyl-D-glutamyl-meso-2,6-diaminopimeloyl-D-alanyl-D-alanine + UDP + H(+). It participates in cell wall biogenesis; peptidoglycan biosynthesis. Functionally, cell wall formation. Catalyzes the transfer of a GlcNAc subunit on undecaprenyl-pyrophosphoryl-MurNAc-pentapeptide (lipid intermediate I) to form undecaprenyl-pyrophosphoryl-MurNAc-(pentapeptide)GlcNAc (lipid intermediate II). The polypeptide is UDP-N-acetylglucosamine--N-acetylmuramyl-(pentapeptide) pyrophosphoryl-undecaprenol N-acetylglucosamine transferase (Jannaschia sp. (strain CCS1)).